The primary structure comprises 699 residues: Endogenous retrovirus group K member 113 Env polyprotein (699 aa).

The interval 1-47 (MNPSEMQRKAPPRRRRHRNRAPLTHKMNKMVTSEEQMKLPSTKKAEP) is disordered. A signal peptide spans 1–89 (MNPSEMQRKA…ALMIVSMVVS (89 aa)). Positions 10 to 20 (APPRRRRHRNR) are enriched in basic residues. The Extracellular portion of the chain corresponds to 90–632 (LPMPAGAAAA…NLNPVTWVKT (543 aa)). Residues Asn100, Asn128, Asn153, Asn274, Asn355, Asn372, and Asn461 are each glycosylated (N-linked (GlcNAc...) asparagine). Residues 466 to 486 (FIFTLIAVIMGLIAVTATAAV) are fusion peptide. N-linked (GlcNAc...) asparagine glycans are attached at residues Asn507, Asn554, Asn566, and Asn585. The chain crosses the membrane as a helical span at residues 633–653 (IGSTTIINLILILVCLFCLLL). The Cytoplasmic portion of the chain corresponds to 654 to 699 (VCRCTQQLRRDSDHRERAMMTMAVLSKRKGGNVGKSKRDQIVTVSV).

It belongs to the beta type-B retroviral envelope protein family. HERV class-II K(HML-2) env subfamily. The surface (SU) and transmembrane (TM) proteins form a heterodimer. SU and TM are attached by noncovalent interactions or by a labile interchain disulfide bond. In terms of processing, specific enzymatic cleavages in vivo yield the mature SU and TM proteins.

It is found in the cell membrane. The protein localises to the virion. In terms of biological role, retroviral envelope proteins mediate receptor recognition and membrane fusion during early infection. Endogenous envelope proteins may have kept, lost or modified their original function during evolution. This endogenous envelope protein has lost its original fusogenic properties. Functionally, SU mediates receptor recognition. Its function is as follows. TM anchors the envelope heterodimer to the viral membrane through one transmembrane domain. The other hydrophobic domain, called fusion peptide, mediates fusion of the viral membrane with the target cell membrane. This is Endogenous retrovirus group K member 113 Env polyprotein (HERVK_113) from Homo sapiens (Human).